The chain runs to 669 residues: DNA ligase (669 aa).

NAD(+)-binding positions include 31–35, 80–81, and Glu-112; these read DSVYD and SL. The N6-AMP-lysine intermediate role is filled by Lys-114. 4 residues coordinate NAD(+): Arg-135, Glu-172, Lys-289, and Lys-313. Zn(2+)-binding residues include Cys-407, Cys-410, Cys-425, and Cys-430. The region spanning 591–669 is the BRCT domain; sequence TDSGKLKGKT…EAEFLQLLEP (79 aa).

This sequence belongs to the NAD-dependent DNA ligase family. LigA subfamily. It depends on Mg(2+) as a cofactor. Mn(2+) is required as a cofactor.

The catalysed reaction is NAD(+) + (deoxyribonucleotide)n-3'-hydroxyl + 5'-phospho-(deoxyribonucleotide)m = (deoxyribonucleotide)n+m + AMP + beta-nicotinamide D-nucleotide.. Its function is as follows. DNA ligase that catalyzes the formation of phosphodiester linkages between 5'-phosphoryl and 3'-hydroxyl groups in double-stranded DNA using NAD as a coenzyme and as the energy source for the reaction. It is essential for DNA replication and repair of damaged DNA. The polypeptide is DNA ligase (Synechocystis sp. (strain ATCC 27184 / PCC 6803 / Kazusa)).